We begin with the raw amino-acid sequence, 586 residues long: Axin-like protein pry-1 (586 aa).

The required for interaction with apr-1 stretch occupies residues 1–135 (METHLGWARS…FIEAFNKMSS (135 aa)). The 122-residue stretch at 10–131 (SLEAVLSDRS…GSEEFIEAFN (122 aa)) folds into the RGS domain. 3 disordered regions span residues 137-168 (TADQ…KSAA), 344-442 (MTDD…DSFA), and 478-501 (TSSL…HSKI). Composition is skewed to polar residues over residues 151-168 (HQNT…KSAA) and 368-388 (GEGS…QLHN). Residues 421 to 442 (SQSMCAPSYSSASSSYSRDSFA) show a composition bias toward low complexity. Residues 486-501 (RRQHRKAPTPKKHSKI) show a composition bias toward basic residues. The DIX domain occupies 505 to 586 (LSNLITISYL…FEGRIAAELR (82 aa)).

In terms of assembly, interacts (via N-terminus) with apr-1 (via C-terminus). Interacts with bar-1 (via ARM repeats), gsk-3, and mig-5. As to expression, expressed in hypodermal cells (seam cells) V5 and V6, Q neuroblasts, ventral hypodermal cells P7/8 to P11/12, body wall muscle cells and neurons in the head, the tail and the ventral nerve cord.

It is found in the cell membrane. Its subcellular location is the nucleus. It localises to the cytoplasm. The protein resides in the cell cortex. In terms of biological role, works in parallel with axl-1 in negatively regulating bar-1 signaling in vulval precursor cells and Q neuroblasts. Inhibits Wnt signaling, which affects tissue specific expression of Hox genes, egl-5, lin-39 and mab-5. This in turn affects QR (postembryonic neuroblast) cell migration, vulval cell fate specification, and the development of sensory structures by the seam cell lineage. Has a role in alae V cell patterning, ray formation in the male tail and axon guidance. Does not affect B cell polarity. The chain is Axin-like protein pry-1 from Caenorhabditis elegans.